Here is a 788-residue protein sequence, read N- to C-terminus: Probable phosphoketolase 1 (788 aa).

This sequence belongs to the XFP family. The cofactor is thiamine diphosphate.

This is Probable phosphoketolase 1 from Lactiplantibacillus plantarum (strain ATCC BAA-793 / NCIMB 8826 / WCFS1) (Lactobacillus plantarum).